An 85-amino-acid polypeptide reads, in one-letter code: Cysteine-rich venom protein 1 (85 aa).

Residues 1 to 21 (MCRYALIVLVVVVVATNLSEA) form the signal peptide. Cystine bridges form between Cys29/Cys63, Cys38/Cys59, Cys42/Cys53, Cys46/Cys84, and Cys65/Cys78. The 56-residue stretch at 29–84 (CEPNRIYKTCGPACPPTCEDPDPDCNETPQCKAGCFCIPGLIENMKGGNCISPSLC) folds into the TIL domain.

It belongs to the serine protease inhibitor-like (TIL domain-containing) family. In terms of tissue distribution, expressed by the venom gland.

It is found in the secreted. Its function is as follows. May be a phenoloxidase inhibitor that stabilizes or inhibits venom phenoloxidase while it is stored in the venom sac. This is Cysteine-rich venom protein 1 from Pimpla hypochondriaca (Parasitoid wasp).